The chain runs to 368 residues: WD repeat-containing protein RUP2 (368 aa).

WD repeat units lie at residues 38 to 77 (SASD…RNNA), 97 to 138 (CTPA…PVFE), 141 to 184 (EHGG…EESV), 192 to 232 (ICRS…DPAL), 236 to 276 (GHTK…RTYE), 279 to 318 (VNNR…PVWV), and 330 to 368 (SDKR…KRKP).

As to quaternary structure, interacts with UVR8.

It is found in the nucleus. Its subcellular location is the cytoplasm. It localises to the cytosol. In terms of biological role, functions in association with RUP1 as repressor of UV-B-induced photomorphogenesis mediated by UVR8 and HY5. Plays a crucial negative feedback regulatory role downstream of UVR8-COP1 to inhibit UVR8 function, balance UV-B-specific responses and ensure normal plant growth. Is involved in the regulation of photoperiodic flowering and vegetative development. May act as negative regulator of photoperiodic flowering by suppressing flowering through the action of CONSTANS (CO) and FLOWERING LOCUS T (FT). The protein is WD repeat-containing protein RUP2 (RUP2) of Arabidopsis thaliana (Mouse-ear cress).